The following is a 558-amino-acid chain: Putative F-box/LRR-repeat protein R542 (558 aa).

The 47-residue stretch at 1–47 folds into the F-box domain; that stretch reads MLLNLPYEILLIIFSLIESKKFFKLLSINKEVREFILTMLNQNPKSF. LRR repeat units follow at residues 73–105, 139–176, 177–220, 251–284, 285–317, 329–361, 369–395, 420–444, 445–477, and 481–508; these read KSTINDDQLKYLSDVYSLNISNCKSITDRGLSF, CGKITDKGIENLVYGKTLNSDEPIPTVINTIRKINLQC, CMRI…KIDG, LDKLTKLILPNVPEHIEYIDFNKMPNLVKADLSG, CINLLDEQLKGLSKVRKLNLKECYDITDVGLSY, CFRITDSGLKYLSNADYVNICGCLKITNEGFFY, VVGYTTLSLYDCMIDGCGDYEYLTISD, CNNIIDVDLKSFTNLPTLSKIDLRY, CNNITNQGLSALCNIPIVKISNNYQISSKGISY, and SKKISIESCPKINSFPNLTGLKKLVFKT.

The polypeptide is Putative F-box/LRR-repeat protein R542 (Acanthamoeba polyphaga mimivirus (APMV)).